The chain runs to 425 residues: Serine hydroxymethyltransferase (425 aa).

Residues Leu-128 and 132-134 (GHL) contribute to the (6S)-5,6,7,8-tetrahydrofolate site. Residue Lys-237 is modified to N6-(pyridoxal phosphate)lysine.

The protein belongs to the SHMT family. In terms of assembly, homodimer. Requires pyridoxal 5'-phosphate as cofactor.

Its subcellular location is the cytoplasm. The catalysed reaction is (6R)-5,10-methylene-5,6,7,8-tetrahydrofolate + glycine + H2O = (6S)-5,6,7,8-tetrahydrofolate + L-serine. It functions in the pathway one-carbon metabolism; tetrahydrofolate interconversion. Its pathway is amino-acid biosynthesis; glycine biosynthesis; glycine from L-serine: step 1/1. Its function is as follows. Catalyzes the reversible interconversion of serine and glycine with tetrahydrofolate (THF) serving as the one-carbon carrier. This reaction serves as the major source of one-carbon groups required for the biosynthesis of purines, thymidylate, methionine, and other important biomolecules. Also exhibits THF-independent aldolase activity toward beta-hydroxyamino acids, producing glycine and aldehydes, via a retro-aldol mechanism. The protein is Serine hydroxymethyltransferase of Wolbachia pipientis wMel.